The sequence spans 503 residues: Maturase K (503 aa).

It belongs to the intron maturase 2 family. MatK subfamily.

The protein localises to the plastid. The protein resides in the chloroplast. Functionally, usually encoded in the trnK tRNA gene intron. Probably assists in splicing its own and other chloroplast group II introns. The polypeptide is Maturase K (Rosa gigantea (Giant tea rose)).